The primary structure comprises 177 residues: Ribonuclease clavin (177 aa).

The first 27 residues, 1–27 (MVAIKNLVLVALTAVTALAMPSPLEER), serve as a signal peptide directing secretion. Cystine bridges form between C33/C175 and C103/C159. H77 is an active-site residue. A disordered region spans residues 98–117 (WGNSDCDRPPKHSKNGDGKN). Residues 102–117 (DCDRPPKHSKNGDGKN) are compositionally biased toward basic and acidic residues. The active-site Proton acceptor is E123. Residue H164 is the Proton donor of the active site.

This sequence belongs to the ribonuclease U2 family.

The protein resides in the secreted. In terms of biological role, clavin has the same substrate specificity as alpha-sarcin. It is specific for purines in both single- and double-stranded RNA. Its toxic action on eukaryotic cells is the result of cleavage of a single phosphodiester bond in the 60S subunit of ribosomes. This chain is Ribonuclease clavin (cla), found in Aspergillus clavatus (strain ATCC 1007 / CBS 513.65 / DSM 816 / NCTC 3887 / NRRL 1 / QM 1276 / 107).